Consider the following 395-residue polypeptide: Protein BTN1 (395 aa).

The N-terminal stretch at 1 to 31 is a signal peptide; sequence MQLEPAHLVYAAFWTFGLVNNVLYVVILTAA. The next 10 membrane-spanning stretches (helical) occupy residues 43 to 63, 74 to 94, 96 to 116, 134 to 154, 158 to 178, 222 to 242, 261 to 278, 291 to 311, 313 to 333, and 355 to 375; these read VVLL…PFFI, LLVG…PLFL, LVGV…FLQL, GAGL…GVSV, LLVF…LLPP, PLVM…YTIN, FRDV…GVFI, IMIP…QSMS, ILPN…LGGA, and LGSV…VSLW.

This sequence belongs to the battenin family.

It localises to the vacuole membrane. Functionally, involved in vacuolar transport and vacuole pH homeostasis. Also required for cytokinesis. The polypeptide is Protein BTN1 (BTN1) (Yarrowia lipolytica (strain CLIB 122 / E 150) (Yeast)).